A 183-amino-acid polypeptide reads, in one-letter code: Ribulose bisphosphate carboxylase small subunit, chloroplastic 4 (183 aa).

The N-terminal 57 residues, 1 to 57 (MASSLMSNAATTMAAATTTAQANMVAPFNGLKSISAFPVTRKNNDITSVASNGGRVQ), are a transit peptide targeting the chloroplast.

Belongs to the RuBisCO small chain family. As to quaternary structure, heterohexadecamer of 8 large and 8 small subunits.

The protein resides in the plastid. It is found in the chloroplast. Functionally, ruBisCO catalyzes two reactions: the carboxylation of D-ribulose 1,5-bisphosphate, the primary event in carbon dioxide fixation, as well as the oxidative fragmentation of the pentose substrate. Both reactions occur simultaneously and in competition at the same active site. Although the small subunit is not catalytic it is essential for maximal activity. This is Ribulose bisphosphate carboxylase small subunit, chloroplastic 4 from Mesembryanthemum crystallinum (Common ice plant).